The following is a 1068-amino-acid chain: TSC22 domain family protein 1 (1068 aa).

A required for interaction with TGFBR1 and promotion of TGF-beta signaling region spans residues Met1–Leu98. 3 disordered regions span residues Ala23–Gly110, Ile125–Ser288, and Tyr602–Gln623. The segment covering Gly36–Ser55 has biased composition (low complexity). Over residues Phe58–Ala70 the composition is skewed to pro residues. A compositionally biased stretch (low complexity) spans Ser84–Pro100. Over residues Glu133–Asp142 the composition is skewed to acidic residues. Positions His216–Ser240 are enriched in basic residues. Low complexity predominate over residues His241–Pro250. The span at Lys261–Ile271 shows a compositional bias: polar residues. Phosphoserine is present on Ser263. Residues Thr272–Ser288 show a composition bias toward low complexity. Pro residues predominate over residues Val609 to Gln620. Residues Val1000–Leu1021 form a leucine-zipper region. The tract at residues Ala1032–Ala1068 is disordered. Residues Gln1039–Ala1068 are compositionally biased toward low complexity.

This sequence belongs to the TSC-22/Dip/Bun family. As to quaternary structure, forms homodimers. Forms heterodimers. Component of a complex composed of TSC22D1 (via N-terminus), TGFBR1 and TGFBR2; the interaction between TSC22D1 and TGFBR1 is inhibited by SMAD7 and promoted by TGFB1. Interacts with SMAD7; the interaction requires TGF-beta and the interaction is inhibited by TGFBR1. Interacts with TPT1/fortilin; interaction results in the destabilization of TSC22D1 protein and prevents TSC22D1-mediated apoptosis. Interacts with SMAD4 (via N-terminus). Interacts with ACVRL1/ALK1, ACVR1/ALK2, BMPR1A/ALK3, ACVR1B/ALK4, BMPR1B/ALK6, ACVR2A/ACTRII, and BMPR2. Interacts with SMAD6. Interacts with TFE3; the interaction is enhanced in the presence of TGF-beta. Forms a heterodimer with TSC22D4/THG1. In terms of assembly, forms a heterodimer with TSC22D4/THG1. Interacts with histone H1-2. Interacts with GNL3.

The protein resides in the cytoplasm. It localises to the nucleus. Its subcellular location is the cell membrane. It is found in the mitochondrion. Transcriptional repressor. Acts on the C-type natriuretic peptide (CNP) promoter. Acts to promote CASP3-mediated apoptosis. Positively regulates TGF-beta signaling by interacting with SMAD7 which inhibits binding of SMAD7 to TGFBR1, preventing recruitment of SMURF ubiquitin ligases to TGFBR1 and inhibiting SMURF-mediated ubiquitination and degradation of TGFBR1. Contributes to enhancement of TGF-beta signaling by binding to and modulating the transcription activator activity of SMAD4. Promotes TGF-beta-induced transcription of COL1A2; via its interaction with TFE3 at E-boxes in the gene proximal promoter. Plays a role in the repression of hematopoietic precursor cell growth. Promotes IL2 deprivation-induced apoptosis in T-lymphocytes, via repression of TSC22D3/GILZ transcription and activation of the caspase cascade. Functionally, may act to negatively regulate TGFB3 signaling and thereby inhibit cell death in mammary gland cells. Its function is as follows. Positively regulates cell death in response to TGFB3 during mammary gland involution. This is TSC22 domain family protein 1 from Macaca fascicularis (Crab-eating macaque).